A 205-amino-acid polypeptide reads, in one-letter code: Small ribosomal subunit protein uS4 (205 aa).

Residues 1-16 (MSKRESSKYKIDRRMG) show a composition bias toward basic and acidic residues. Residues 1–46 (MSKRESSKYKIDRRMGENIWGRPKSPVNRREYGPGQHGQRRKGKLS) form a disordered region. Residues 94-157 (SRLDAIVYRA…KQLVTVLEAV (64 aa)) form the S4 RNA-binding domain.

The protein belongs to the universal ribosomal protein uS4 family. In terms of assembly, part of the 30S ribosomal subunit. Contacts protein S5. The interaction surface between S4 and S5 is involved in control of translational fidelity.

Its function is as follows. One of the primary rRNA binding proteins, it binds directly to 16S rRNA where it nucleates assembly of the body of the 30S subunit. Functionally, with S5 and S12 plays an important role in translational accuracy. The protein is Small ribosomal subunit protein uS4 of Rhizobium etli (strain ATCC 51251 / DSM 11541 / JCM 21823 / NBRC 15573 / CFN 42).